Here is a 710-residue protein sequence, read N- to C-terminus: E3 ubiquitin-protein ligase TRIM9 (710 aa).

Residues 10 to 50 (CPVCGSFYREPIILPCSHNLCQACARNILVQTPESESPQSH) form an RING-type zinc finger. Thr41 carries the post-translational modification Phosphothreonine. Phosphoserine occurs at positions 44, 46, and 49. 2 B box-type zinc fingers span residues 163 to 212 (AAAL…LVPP) and 224 to 266 (RKVS…VKAL). Residues Cys168, Cys171, Cys193, His198, Cys229, His232, Cys252, and His258 each coordinate Zn(2+). Residues 273–340 (HKSQLSQALN…KAQLLARVNK (68 aa)) adopt a coiled-coil conformation. In terms of domain architecture, COS spans 374 to 432 (IKENDPSGFLQISDALIRRVHLTEDQWGKGTLTPRMTTDFDLSLDNSPLLQSIHQLDFV). In terms of domain architecture, Fibronectin type-III spans 440-535 (VPATPILQLE…KTLVLQTSEV (96 aa)). The region spanning 533–702 (SEVAWFAFDP…LHTGLPVPDF (170 aa)) is the B30.2/SPRY domain.

The protein belongs to the TRIM/RBCC family. As to quaternary structure, interacts with SNAP25. Auto-ubiquitinated. Poly-ubiquitinated in cultured cells, whereas it is monoubiquitinated in vitro. In terms of tissue distribution, brain. Highly expressed in the cerebral cortex (at protein level). Severely decreased in the affected brain areas in Parkinson disease and dementia with Lewy bodies.

Its subcellular location is the cytoplasm. It is found in the cell projection. The protein resides in the dendrite. The protein localises to the cytoplasmic vesicle. It localises to the secretory vesicle. Its subcellular location is the synaptic vesicle. It is found in the synapse. The protein resides in the cytoskeleton. The catalysed reaction is S-ubiquitinyl-[E2 ubiquitin-conjugating enzyme]-L-cysteine + [acceptor protein]-L-lysine = [E2 ubiquitin-conjugating enzyme]-L-cysteine + N(6)-ubiquitinyl-[acceptor protein]-L-lysine.. The protein operates within protein modification; protein ubiquitination. Functionally, E3 ubiquitin-protein ligase which ubiquitinates itself in cooperation with an E2 enzyme UBE2D2/UBC4 and serves as a targeting signal for proteasomal degradation. May play a role in regulation of neuronal functions and may also participate in the formation or breakdown of abnormal inclusions in neurodegenerative disorders. May act as a regulator of synaptic vesicle exocytosis by controlling the availability of SNAP25 for the SNARE complex formation. This Homo sapiens (Human) protein is E3 ubiquitin-protein ligase TRIM9 (TRIM9).